Here is an 88-residue protein sequence, read N- to C-terminus: HssA/B-like protein 64 (88 aa).

The segment covering 1 to 24 (MTLFSSISSMSSSMTSSKSSFASF) has biased composition (low complexity). 2 disordered regions span residues 1 to 25 (MTLF…ASFG) and 45 to 88 (GVSS…GNSC). Gly residues predominate over residues 56-66 (AKSGGDCGGKG).

The protein belongs to the hssA/B family.

This Dictyostelium discoideum (Social amoeba) protein is HssA/B-like protein 64 (hssl64).